The following is a 404-amino-acid chain: Serine/threonine transporter SstT (404 aa).

8 helical membrane passes run 17 to 37 (IGIG…LTGF), 39 to 59 (ILGK…VFAL), 75 to 95 (MTLI…VAVL), 138 to 158 (ALAT…GLAL), 179 to 199 (IVVW…FTTI), 212 to 232 (FLIL…NPLI), 287 to 307 (IPLG…VLTL), and 313 to 333 (FGIP…AVSA).

Belongs to the dicarboxylate/amino acid:cation symporter (DAACS) (TC 2.A.23) family.

It is found in the cell membrane. The catalysed reaction is L-serine(in) + Na(+)(in) = L-serine(out) + Na(+)(out). It catalyses the reaction L-threonine(in) + Na(+)(in) = L-threonine(out) + Na(+)(out). Involved in the import of serine and threonine into the cell, with the concomitant import of sodium (symport system). The protein is Serine/threonine transporter SstT of Streptococcus pyogenes serotype M1.